The following is a 96-amino-acid chain: UPF0235 protein VCM66_0443 (96 aa).

This sequence belongs to the UPF0235 family.

This Vibrio cholerae serotype O1 (strain M66-2) protein is UPF0235 protein VCM66_0443.